The chain runs to 1773 residues: Plexin-2 (1773 aa).

The first 19 residues, 1 to 19 (MLFIESAFLVLTSLSAAEA), serve as a signal peptide directing secretion. The region spanning 20–436 (ATPFEGGVKQ…MPYGIVMEEL (417 aa)) is the Sema domain. At 20 to 1130 (ATPFEGGVKQ…SDHALPSRLS (1111 aa)) the chain is on the extracellular side. The N-linked (GlcNAc...) asparagine glycan is linked to Asn-65. 9 cysteine pairs are disulfide-bonded: Cys-83–Cys-90, Cys-117–Cys-125, Cys-239–Cys-341, Cys-255–Cys-292, Cys-310–Cys-328, Cys-439–Cys-456, Cys-445–Cys-479, Cys-448–Cys-465, and Cys-459–Cys-471. Asn-241 carries an N-linked (GlcNAc...) asparagine glycan. Residues 438–480 (TCAHHESCTDCQVSVDPLCQWCHPTQSCTTSSRCSGPLTTQCP) enclose the PSI 1 domain. Asn-494 is a glycosylation site (N-linked (GlcNAc...) asparagine). A disulfide bridge links Cys-516 with Cys-538. An N-linked (GlcNAc...) asparagine glycan is attached at Asn-566. One can recognise a PSI 2 domain in the interval 571–608 (DCAGYSTCSTCMSSEFGCQWCSHKCSSSCGSASAKACV). Residues Asn-670 and Asn-693 are each glycosylated (N-linked (GlcNAc...) asparagine). The PSI 3 domain maps to 698–739 (SCSNLAADCSSCLALSPSLSCGWCNRKCSHECHESKATAVCD). 3 IPT/TIG domains span residues 741 to 829 (PKID…FSFV), 831 to 916 (VSIF…FEYR), and 919 to 1006 (PSVN…FLMD). N-linked (GlcNAc...) asparagine glycosylation is found at Asn-855, Asn-877, Asn-975, and Asn-1007. A helical transmembrane segment spans residues 1131–1151 (FLILGLLLFTVITLIVMCLIF). Residues 1150 to 1188 (IFKRRRQEREKEYRKIQLQMENLENNVRKECKQAFAELQ) adopt a coiled-coil conformation. The Cytoplasmic portion of the chain corresponds to 1152–1764 (KRRRQEREKE…LHVCLETDNH (613 aa)).

The protein belongs to the plexin family. As to quaternary structure, interacts with mab-20.

The protein resides in the cell membrane. Involved as a receptor for mab-20/sema-2a in the formation or stabilization of cell-cell contacts at several stages of epithelial morphogenesis. In early embryonic development, required for proper ventral closure of the epidermis. During male tail morphogenesis, involved in precursor cell sorting and in the formation of distinct sensory rays. Involved in axon guidance of SDQL neurons during neurogenesis. The polypeptide is Plexin-2 (plx-2) (Caenorhabditis briggsae).